Reading from the N-terminus, the 140-residue chain is Relaxin-3 (140 aa).

The signal sequence occupies residues Met1–Ala26. 3 cysteine pairs are disulfide-bonded: Cys36-Cys127, Cys48-Cys140, and Cys126-Cys131. Residues Ser56 to Arg116 constitute a propeptide, connecting peptide.

Belongs to the insulin family. In terms of assembly, heterodimer of a B chain and an A chain linked by two disulfide bonds.

It localises to the secreted. May play a role in neuropeptide signaling processes. Ligand for LGR7, RXFP3 and RXFP4. This chain is Relaxin-3 (RLN3), found in Sus scrofa (Pig).